A 589-amino-acid chain; its full sequence is Mitoguardin 2 (589 aa).

The next 2 membrane-spanning stretches (helical) occupy residues 11 to 31 (IIQA…TTFG) and 42 to 62 (PGLR…ALAA). A disordered region spans residues 87–134 (VPGSVLPVRRSSSAKKGYSRSRVQSPSSKSNDTLSGISSLDPSKHSSS). Composition is skewed to low complexity over residues 106–116 (RSRVQSPSSKS) and 123–134 (ISSLDPSKHSSS).

Belongs to the mitoguardin family. As to quaternary structure, homodimer and heterodimer; forms heterodimers with miga1.

Its subcellular location is the mitochondrion outer membrane. Regulator of mitochondrial fusion: acts by forming homo- and heterodimers at the mitochondrial outer membrane and facilitating the formation of pld6/MitoPLD dimers. May act by regulating phospholipid metabolism via pld6/MitoPLD. The sequence is that of Mitoguardin 2 from Xenopus laevis (African clawed frog).